The chain runs to 290 residues: Syntaxin (290 aa).

Residues M1–V22 are disordered. The Cytoplasmic segment spans residues M1–K267. The stretch at M32 to D114 forms a coiled coil. Residues L194–A256 form the t-SNARE coiled-coil homology domain. Residues I268 to T288 form a helical; Anchor for type IV membrane protein membrane-spanning segment. At L289–G290 the chain is on the extracellular side.

It belongs to the syntaxin family.

Its subcellular location is the membrane. Potentially involved in docking of synaptic vesicles at presynaptic active zones. The sequence is that of Syntaxin from Aplysia californica (California sea hare).